Here is a 365-residue protein sequence, read N- to C-terminus: Peptide chain release factor 2 (365 aa).

An N5-methylglutamine modification is found at Q252.

It belongs to the prokaryotic/mitochondrial release factor family. Methylated by PrmC. Methylation increases the termination efficiency of RF2.

It localises to the cytoplasm. In terms of biological role, peptide chain release factor 2 directs the termination of translation in response to the peptide chain termination codons UGA and UAA. The protein is Peptide chain release factor 2 of Pasteurella multocida (strain Pm70).